A 480-amino-acid chain; its full sequence is Peptidase S41 family protein ustP (480 aa).

A disordered region spans residues 78 to 97 (CMPNKKSRPPDPRPSLAVGK). Residues 134 to 336 (DVAVLQLPTF…LKQQGVRSIV (203 aa)) are peptidase S41 domain.

This sequence belongs to the peptidase S41A family.

Its pathway is mycotoxin biosynthesis. Its function is as follows. Peptidase S41 family protein; part of the gene cluster that mediates the biosynthesis of the secondary metabolite ustiloxin B, an antimitotic tetrapeptide. First, ustA is processed by the subtilisin-like endoprotease Kex2 that is outside the ustiloxin B gene cluster, at the C-terminal side of Arg-Lys, after transfer to Golgi apparatus through the endoplasmic reticulum (ER). Cleavage by KEX2 generates 16 peptides YAIG-I to YAIG-XVI. To process the precursor peptide further, at least two peptidases are necessary to cleave the N-terminal and C-terminal sides of the Tyr-Ala-Ile-Gly core peptide which serves as backbone for the synthesis of ustiloxin B, through cyclization and modification of the tyrosine with a non-protein coding amino acid, norvaline. One of the two peptidases must be the serine peptidase ustP; and the other pepdidase is probably ustH. Macrocyclization of the core peptide derived from ustA requires the tyrosinase ustQ, as well as the homologous oxidases ustYa and ustYb, and leads to the production of the first cyclization product N-desmethylustiloxin F. For the formation of N-desmethylustiloxin F, three oxidation steps are required, hydroxylation at the benzylic position, hydroxylation at either the aromatic ring of Tyr or beta-position of Ile, and oxidative cyclization. UstQ may catalyze the oxidation of a phenol moiety, whereas the ustYa and ustYb are most likely responsible for the remaining two-step oxidations. N-desmethylustiloxin F is then methylated by ustM to yield ustiloxin F which in turn substrate of the cytochrome P450 monooxygenase ustC which catalyzes the formation of S-deoxyustiloxin H. The flavoprotein monooxygenases ustF1 and ustF2 then participate in the modification of the side chain of S-deoxyustiloxin H, leading to the synthesis of an oxime intermediate, via ustiloxin H. Finally, carboxylative dehydration performed by the cysteine desulfurase-like protein ustD yields ustiloxin B. The polypeptide is Peptidase S41 family protein ustP (Aspergillus flavus (strain ATCC 200026 / FGSC A1120 / IAM 13836 / NRRL 3357 / JCM 12722 / SRRC 167)).